The primary structure comprises 491 residues: Trypanothione reductase (491 aa).

35-51 lines the FAD pocket; that stretch reads DLQKHHGPPHYAALGGT. The cysteines at positions 52 and 57 are disulfide-linked. Histidine 461 acts as the Proton acceptor in catalysis.

Belongs to the class-I pyridine nucleotide-disulfide oxidoreductase family. As to quaternary structure, homodimer. FAD serves as cofactor. In terms of processing, the N-terminus is blocked.

It localises to the cytoplasm. The enzyme catalyses trypanothione + NADP(+) = trypanothione disulfide + NADPH + H(+). Its function is as follows. Trypanothione is the parasite analog of glutathione; this enzyme is the equivalent of glutathione reductase. In Crithidia fasciculata, this protein is Trypanothione reductase (TPR).